The chain runs to 250 residues: Cell division protein ZapD (250 aa).

The protein belongs to the ZapD family. As to quaternary structure, interacts with FtsZ.

The protein localises to the cytoplasm. Functionally, cell division factor that enhances FtsZ-ring assembly. Directly interacts with FtsZ and promotes bundling of FtsZ protofilaments, with a reduction in FtsZ GTPase activity. This Yersinia pseudotuberculosis serotype O:1b (strain IP 31758) protein is Cell division protein ZapD.